The primary structure comprises 99 residues: Acylphosphatase (99 aa).

An Acylphosphatase-like domain is found at Val5–Pro97. Residues Arg20 and Asn38 contribute to the active site.

This sequence belongs to the acylphosphatase family.

The catalysed reaction is an acyl phosphate + H2O = a carboxylate + phosphate + H(+). The sequence is that of Acylphosphatase (acyP) from Rhodopseudomonas palustris (strain BisB18).